Consider the following 151-residue polypeptide: Glycine and methionine-rich protein (151 aa).

The first 19 residues, 1–19 (MKTAVVLAAFSALMALARA), serve as a signal peptide directing secretion.

Component of the acid-insoluble and acid-soluble organic matrix of calcified layers of the shell (at protein level).

The protein resides in the secreted. The sequence is that of Glycine and methionine-rich protein from Lottia gigantea (Giant owl limpet).